Here is a 235-residue protein sequence, read N- to C-terminus: Transmembrane emp24 domain-containing protein 9 (235 aa).

The first 37 residues, 1 to 37 (MAAVRGVRVVGTSPGLLLGRGMRAFLLLLCLAARGGA), serve as a signal peptide directing secretion. Residues 38–202 (LYFHIGETEK…RQTSESTNQR (165 aa)) are Lumenal-facing. Residues 47-145 (KKCFIEEIPD…MLRVHLDIQV (99 aa)) form the GOLD domain. The tract at residues 121-160 (CLHSNSTKFSLFAGGMLRVHLDIQVGEHANDYAEIAAKDK) is required for interaction with STX17. A glycan (N-linked (GlcNAc...) asparagine) is linked at Asn-125. Residues 154-184 (EIAAKDKLSELQLRVRQLVEQVEQIQKEQNY) are a coiled coil. Position 160 is an N6-acetyllysine (Lys-160). A helical membrane pass occupies residues 203 to 222 (VLWWSILQTLILVAIGVWQM). Topologically, residues 223–235 (RHLKSFFEAKKLV) are cytoplasmic. Residues 228-229 (FF) carry the COPII vesicle coat-binding motif. Positions 228–235 (FFEAKKLV) match the COPI vesicle coat-binding motif.

The protein belongs to the EMP24/GP25L family. In terms of assembly, monomer and homodimer in endoplasmic reticulum. Predominantly monomeric and to lesser extent homodimeric in endoplasmic reticulum-Golgi intermediate compartment and cis-Golgi network. Probably oligomerizes with other members of the EMP24/GP25L family such as TMED2, TMED7 and TMED10. Interacts with TMED5. Interacts (via C-terminus) with COPG1; the interaction involves dimeric TMED9. Interacts with PTPN2 and SPAST. Interacts with STX17; the interaction is direct. Post-translationally, N-linked glycosylated containing high mannose.

It is found in the endoplasmic reticulum membrane. It localises to the golgi apparatus. Its subcellular location is the cis-Golgi network membrane. The protein localises to the endoplasmic reticulum-Golgi intermediate compartment membrane. The protein resides in the trans-Golgi network membrane. Its function is as follows. Appears to be involved in vesicular protein trafficking, mainly in the early secretory pathway. In COPI vesicle-mediated retrograde transport involved in the coatomer recruitment to membranes of the early secretory pathway. Increases coatomer-dependent activity of ARFGAP2. Thought to play a crucial role in the specific retention of p24 complexes in cis-Golgi membranes; specifically contributes to the coupled localization of TMED2 and TMED10 in the cis-Golgi network. May be involved in organization of intracellular membranes, such as of the ER-Golgi intermediate compartment and the Golgi apparatus. Involved in ER localization of PTPN2. The sequence is that of Transmembrane emp24 domain-containing protein 9 (Tmed9) from Rattus norvegicus (Rat).